Here is a 234-residue protein sequence, read N- to C-terminus: MSRAALDKDPRDVASMFDGVARKYDLTNTVLSLGQDRYWRRATRSALRIGPGQKVLDLAAGTAVSTVELTKSGAWCVAADFSVGMLAAGAARKVPKVAGDATRLPFGDDVFDAVTISFGLRNVANQQAALREMARVTRPGGRLLVCEFSTPTNALFATAYKEYLMRALPRVARAVSSNPEAYEYLAESIRAWPDQAVLAHQISRAGWSGVRWRNLTGGIVALHAGYKPGKQTPQ.

S-adenosyl-L-methionine-binding positions include threonine 62, aspartate 80, aspartate 100 to alanine 101, and serine 117.

The protein belongs to the class I-like SAM-binding methyltransferase superfamily. MenG/UbiE family.

It carries out the reaction a 2-demethylmenaquinol + S-adenosyl-L-methionine = a menaquinol + S-adenosyl-L-homocysteine + H(+). It participates in quinol/quinone metabolism; menaquinone biosynthesis; menaquinol from 1,4-dihydroxy-2-naphthoate: step 2/2. Methyltransferase required for the conversion of demethylmenaquinol (DMKH2) to menaquinol (MKH2). The protein is Demethylmenaquinone methyltransferase of Mycobacterium bovis (strain ATCC BAA-935 / AF2122/97).